A 134-amino-acid chain; its full sequence is Protein NrdI (134 aa).

Belongs to the NrdI family.

In terms of biological role, probably involved in ribonucleotide reductase function. The polypeptide is Protein NrdI (Yersinia enterocolitica serotype O:8 / biotype 1B (strain NCTC 13174 / 8081)).